We begin with the raw amino-acid sequence, 93 residues long: Putative pterin-4-alpha-carbinolamine dehydratase (93 aa).

This sequence belongs to the pterin-4-alpha-carbinolamine dehydratase family.

The enzyme catalyses (4aS,6R)-4a-hydroxy-L-erythro-5,6,7,8-tetrahydrobiopterin = (6R)-L-erythro-6,7-dihydrobiopterin + H2O. The polypeptide is Putative pterin-4-alpha-carbinolamine dehydratase (Sulfurisphaera tokodaii (strain DSM 16993 / JCM 10545 / NBRC 100140 / 7) (Sulfolobus tokodaii)).